Here is a 179-residue protein sequence, read N- to C-terminus: GTP-dependent dephospho-CoA kinase (179 aa).

GTP contacts are provided by Asp-50, Val-51, Val-52, Asp-69, Lys-71, and Glu-126.

The protein belongs to the GTP-dependent DPCK family.

The enzyme catalyses 3'-dephospho-CoA + GTP = GDP + CoA + H(+). It functions in the pathway cofactor biosynthesis; coenzyme A biosynthesis. Catalyzes the GTP-dependent phosphorylation of the 3'-hydroxyl group of dephosphocoenzyme A to form coenzyme A (CoA). This Pyrococcus horikoshii (strain ATCC 700860 / DSM 12428 / JCM 9974 / NBRC 100139 / OT-3) protein is GTP-dependent dephospho-CoA kinase.